Consider the following 238-residue polypeptide: Cysteine-rich venom protein (238 aa).

An N-terminal signal peptide occupies residues M1–G19. The region spanning V38–Y164 is the SCP domain. Intrachain disulfides connect C75–C153, C92–C165, C148–C162, C184–C191, C187–C196, C200–C233, C209–C227, and C218–C231. A ShKT domain is found at C200–C233.

The protein belongs to the CRISP family. As to expression, expressed by the venom gland.

It is found in the secreted. Functionally, blocks olfactory (CNGA2) and retinal (CNGA1) CNG channel currents. Does not affect neither depolarization- nor caffeine-induced contraction of smooth muscle. The chain is Cysteine-rich venom protein from Drysdalia coronoides (White-lipped snake).